The sequence spans 1423 residues: DNA-directed RNA polymerase subunit beta' (1423 aa).

4 residues coordinate Zn(2+): C71, C73, C86, and C89. Mg(2+) contacts are provided by D461, D463, and D465. Zn(2+)-binding residues include C815, C889, C896, and C899.

The protein belongs to the RNA polymerase beta' chain family. In terms of assembly, the RNAP catalytic core consists of 2 alpha, 1 beta, 1 beta' and 1 omega subunit. When a sigma factor is associated with the core the holoenzyme is formed, which can initiate transcription. Mg(2+) is required as a cofactor. It depends on Zn(2+) as a cofactor.

It catalyses the reaction RNA(n) + a ribonucleoside 5'-triphosphate = RNA(n+1) + diphosphate. Functionally, DNA-dependent RNA polymerase catalyzes the transcription of DNA into RNA using the four ribonucleoside triphosphates as substrates. This is DNA-directed RNA polymerase subunit beta' from Actinobacillus pleuropneumoniae serotype 7 (strain AP76).